A 214-amino-acid chain; its full sequence is Single-pass membrane and coiled-coil domain-containing protein 1 (214 aa).

Residues 5–40 are a coiled coil; it reads TTTLISLKEAMKRVDNKLRALDTQFKELDVTKDNLT. Residues 59-81 form a helical membrane-spanning segment; that stretch reads IWTAALALGFTSMELNIVYSYVI. Positions 193 to 214 are disordered; sequence KQAQDPENSRAPLKELMPPVKD.

The protein localises to the membrane. The chain is Single-pass membrane and coiled-coil domain-containing protein 1 (Smco1) from Mus musculus (Mouse).